The chain runs to 89 residues: Antimicrobial peptide Ar-AMP (89 aa).

The N-terminal stretch at 1 to 25 (MVNMKSVALIVIVMMAFMMVDPSMG) is a signal peptide. A Chitin-binding type-1 domain is found at 26 to 68 (AGECVQGRCPSGMCCSQFGYCGRGPKYCGRASTTVDHQADAAA). 3 disulfides stabilise this stretch: Cys-29–Cys-40, Cys-34–Cys-46, and Cys-39–Cys-53. The propeptide at 56-89 (ASTTVDHQADAAAAAATKTANNPTDAKLAGAGSP) is removed in mature form.

Functionally, chitin-binding protein that inhibits the growth of the fungal pathogens B.cinerea, F.culmorum, H.sativum and A.consortiale, but not that of R.solani. Induces morphological changes in the fungal pathogens F.culmorum, H.sativum and R.solani, but not in A.consortiale and B.cinerea. Has antibacterial activity against the Gram-positive bacterium B.subtilis, but lacks antibacterial activity against the Gram-negative bacterium E.coli. The polypeptide is Antimicrobial peptide Ar-AMP (Amaranthus retroflexus (Redroot amaranth)).